The primary structure comprises 164 residues: Transcriptional repressor NrdR (164 aa).

The segment at 3-34 (CPKCNYHKSSVVDSRQAEDGNTIRRRRECEQC) is a zinc-finger region. Residues 49-139 (LLVIKKDGTR…VYKSFKDVDE (91 aa)) form the ATP-cone domain.

Belongs to the NrdR family. Zn(2+) is required as a cofactor.

In terms of biological role, negatively regulates transcription of bacterial ribonucleotide reductase nrd genes and operons by binding to NrdR-boxes. This is Transcriptional repressor NrdR from Streptococcus pyogenes serotype M6 (strain ATCC BAA-946 / MGAS10394).